Consider the following 89-residue polypeptide: Small ribosomal subunit protein uS15 (89 aa).

This sequence belongs to the universal ribosomal protein uS15 family. As to quaternary structure, part of the 30S ribosomal subunit. Forms a bridge to the 50S subunit in the 70S ribosome, contacting the 23S rRNA.

Functionally, one of the primary rRNA binding proteins, it binds directly to 16S rRNA where it helps nucleate assembly of the platform of the 30S subunit by binding and bridging several RNA helices of the 16S rRNA. In terms of biological role, forms an intersubunit bridge (bridge B4) with the 23S rRNA of the 50S subunit in the ribosome. The protein is Small ribosomal subunit protein uS15 of Oleidesulfovibrio alaskensis (strain ATCC BAA-1058 / DSM 17464 / G20) (Desulfovibrio alaskensis).